A 509-amino-acid polypeptide reads, in one-letter code: Steroid 17-alpha-hydroxylase/17,20 lyase (509 aa).

Asn-202 is a substrate binding site. Cys-442 contributes to the heme binding site.

This sequence belongs to the cytochrome P450 family. It depends on heme as a cofactor.

Its subcellular location is the endoplasmic reticulum membrane. The protein resides in the microsome membrane. It carries out the reaction a C21-steroid + reduced [NADPH--hemoprotein reductase] + O2 = a 17alpha-hydroxy-C21-steroid + oxidized [NADPH--hemoprotein reductase] + H2O + H(+). It catalyses the reaction progesterone + reduced [NADPH--hemoprotein reductase] + O2 = 17alpha-hydroxyprogesterone + oxidized [NADPH--hemoprotein reductase] + H2O + H(+). The catalysed reaction is pregnenolone + reduced [NADPH--hemoprotein reductase] + O2 = 17alpha-hydroxypregnenolone + oxidized [NADPH--hemoprotein reductase] + H2O + H(+). The enzyme catalyses 17alpha-hydroxyprogesterone + reduced [NADPH--hemoprotein reductase] + O2 = androst-4-ene-3,17-dione + acetate + oxidized [NADPH--hemoprotein reductase] + H2O + 2 H(+). It carries out the reaction 17alpha-hydroxyprogesterone + reduced [NADPH--hemoprotein reductase] + O2 = 16alpha,17alpha-dihydroxyprogesterone + oxidized [NADPH--hemoprotein reductase] + H2O + H(+). It catalyses the reaction 16alpha,17alpha-dihydroxyprogesterone + reduced [NADPH--hemoprotein reductase] + O2 = 6beta,16alpha,17alpha-trihydroxyprogesterone + oxidized [NADPH--hemoprotein reductase] + H2O + H(+). The catalysed reaction is 17alpha-hydroxypregnenolone + reduced [NADPH--hemoprotein reductase] + O2 = 3beta-hydroxyandrost-5-en-17-one + acetate + oxidized [NADPH--hemoprotein reductase] + H2O + 2 H(+). The enzyme catalyses 16alpha,17alpha-dihydroxypregnenolone + reduced [NADPH--hemoprotein reductase] + O2 = 3beta,16alpha-dihydroxy-androst-5-en-17-one + acetate + oxidized [NADPH--hemoprotein reductase] + H2O + 2 H(+). It carries out the reaction 3beta-hydroxyandrost-5-en-17-one + reduced [NADPH--hemoprotein reductase] + O2 = 3beta,16alpha-dihydroxy-androst-5-en-17-one + oxidized [NADPH--hemoprotein reductase] + H2O + H(+). It catalyses the reaction androst-4-ene-3,17-dione + reduced [NADPH--hemoprotein reductase] + O2 = 16alpha-hydroxyandrost-4-ene-3,17-dione + oxidized [NADPH--hemoprotein reductase] + H2O + H(+). It participates in steroid hormone biosynthesis. Its pathway is steroid biosynthesis; glucocorticoid biosynthesis. Its activity is regulated as follows. Regulated predominantly by intracellular cAMP levels. The 17,20-lyase activity is stimulated by cytochrome b5, which acts as an allosteric effector increasing the Vmax of the lyase activity. A cytochrome P450 monooxygenase involved in corticoid and androgen biosynthesis. Catalyzes 17-alpha hydroxylation of C21 steroids, which is common for both pathways. A second oxidative step, required only for androgen synthesis, involves an acyl-carbon cleavage. The 17-alpha hydroxy intermediates, as part of adrenal glucocorticoids biosynthesis pathway, are precursors of cortisol. Hydroxylates steroid hormones, pregnenolone and progesterone to form 17-alpha hydroxy metabolites, followed by the cleavage of the C17-C20 bond to form C19 steroids, dehydroepiandrosterone (DHEA) and androstenedione. Has 16-alpha hydroxylase activity. Catalyzes 16-alpha hydroxylation of 17-alpha hydroxy pregnenolone, followed by the cleavage of the C17-C20 bond to form 16-alpha-hydroxy DHEA. Also 16-alpha hydroxylates androgens, relevant for estriol synthesis. Mechanistically, uses molecular oxygen inserting one oxygen atom into a substrate, and reducing the second into a water molecule, with two electrons provided by NADPH via cytochrome P450 reductase (CPR; NADPH-ferrihemoprotein reductase). The sequence is that of Steroid 17-alpha-hydroxylase/17,20 lyase (CYP17A1) from Sus scrofa (Pig).